The following is a 218-amino-acid chain: Ribosomal RNA small subunit methyltransferase G (218 aa).

Residues G86, L91, 137 to 138, and R153 each bind S-adenosyl-L-methionine; that span reads AE.

The protein belongs to the methyltransferase superfamily. RNA methyltransferase RsmG family.

It localises to the cytoplasm. The catalysed reaction is guanosine(527) in 16S rRNA + S-adenosyl-L-methionine = N(7)-methylguanosine(527) in 16S rRNA + S-adenosyl-L-homocysteine. Specifically methylates the N7 position of guanine in position 527 of 16S rRNA. This Nitratidesulfovibrio vulgaris (strain ATCC 29579 / DSM 644 / CCUG 34227 / NCIMB 8303 / VKM B-1760 / Hildenborough) (Desulfovibrio vulgaris) protein is Ribosomal RNA small subunit methyltransferase G.